A 449-amino-acid polypeptide reads, in one-letter code: UDP-N-acetylglucosamine 1-carboxyvinyltransferase (449 aa).

51–52 contributes to the phosphoenolpyruvate binding site; sequence KN. Arginine 121 serves as a coordination point for UDP-N-acetyl-alpha-D-glucosamine. Cysteine 145 acts as the Proton donor in catalysis. Cysteine 145 bears the 2-(S-cysteinyl)pyruvic acid O-phosphothioketal mark. Residues 150-154, aspartate 333, and isoleucine 355 contribute to the UDP-N-acetyl-alpha-D-glucosamine site; that span reads RPVDQ.

It belongs to the EPSP synthase family. MurA subfamily.

It is found in the cytoplasm. It carries out the reaction phosphoenolpyruvate + UDP-N-acetyl-alpha-D-glucosamine = UDP-N-acetyl-3-O-(1-carboxyvinyl)-alpha-D-glucosamine + phosphate. The protein operates within cell wall biogenesis; peptidoglycan biosynthesis. In terms of biological role, cell wall formation. Adds enolpyruvyl to UDP-N-acetylglucosamine. The sequence is that of UDP-N-acetylglucosamine 1-carboxyvinyltransferase from Burkholderia lata (strain ATCC 17760 / DSM 23089 / LMG 22485 / NCIMB 9086 / R18194 / 383).